Consider the following 180-residue polypeptide: MVPRLKEKYQTEVVPALMQEFQYRSVMQAPRLEKIVLNIGLGEAIQNSKALDAATSDLAAIAGQKPVITRARKSIAAFKVRQGMPIGVMVTLRGPRMWSFFDRLVNLVLPRLRDFRGVSRRSFDGRGNYSLGLREQIVFPEIDYDKVDKLRGLEVVIVTTAPDDEQGYALLKRLGMPFRD.

It belongs to the universal ribosomal protein uL5 family. Part of the 50S ribosomal subunit; part of the 5S rRNA/L5/L18/L25 subcomplex. Contacts the 5S rRNA and the P site tRNA. Forms a bridge to the 30S subunit in the 70S ribosome.

Functionally, this is one of the proteins that bind and probably mediate the attachment of the 5S RNA into the large ribosomal subunit, where it forms part of the central protuberance. In the 70S ribosome it contacts protein S13 of the 30S subunit (bridge B1b), connecting the 2 subunits; this bridge is implicated in subunit movement. Contacts the P site tRNA; the 5S rRNA and some of its associated proteins might help stabilize positioning of ribosome-bound tRNAs. This Roseiflexus castenholzii (strain DSM 13941 / HLO8) protein is Large ribosomal subunit protein uL5.